A 382-amino-acid polypeptide reads, in one-letter code: Proton extrusion protein PxcA (382 aa).

Transmembrane regions (helical) follow at residues 156 to 176, 257 to 277, 305 to 325, and 340 to 360; these read TLIS…VQQV, AVKN…VCLF, IILF…TVLL, and FILL…KYWI.

The protein belongs to the CemA family.

The protein localises to the cell inner membrane. Required for H(+) efflux immediately after light irradiation to form a rapid H(+) concentration gradient across the thylakoid membranes. Together with PxcL, contributes to transient H(+) uptake following dark to light transition. The protein is Proton extrusion protein PxcA of Synechococcus sp. (strain CC9311).